A 224-amino-acid chain; its full sequence is V-type ATP synthase subunit D (224 aa).

Residues 205–214 (AKAKQQRKDI) are compositionally biased toward basic and acidic residues. The disordered stretch occupies residues 205–224 (AKAKQQRKDIQSGNHGSAAD). Over residues 215-224 (QSGNHGSAAD) the composition is skewed to polar residues.

Belongs to the V-ATPase D subunit family.

Functionally, produces ATP from ADP in the presence of a proton gradient across the membrane. The chain is V-type ATP synthase subunit D from Deinococcus deserti (strain DSM 17065 / CIP 109153 / LMG 22923 / VCD115).